We begin with the raw amino-acid sequence, 325 residues long: Elongation factor P--(R)-beta-lysine ligase (325 aa).

76–78 contacts substrate; that stretch reads SPE. ATP-binding positions include 100 to 102 and N109; that span reads RNE. Y118 is a substrate binding site. Residue 244–245 participates in ATP binding; the sequence is EL. Residue E251 participates in substrate binding. G300 contacts ATP.

This sequence belongs to the class-II aminoacyl-tRNA synthetase family. EpmA subfamily. As to quaternary structure, homodimer.

The enzyme catalyses D-beta-lysine + L-lysyl-[protein] + ATP = N(6)-((3R)-3,6-diaminohexanoyl)-L-lysyl-[protein] + AMP + diphosphate + H(+). Its function is as follows. With EpmB is involved in the beta-lysylation step of the post-translational modification of translation elongation factor P (EF-P). Catalyzes the ATP-dependent activation of (R)-beta-lysine produced by EpmB, forming a lysyl-adenylate, from which the beta-lysyl moiety is then transferred to the epsilon-amino group of a conserved specific lysine residue in EF-P. This Photorhabdus laumondii subsp. laumondii (strain DSM 15139 / CIP 105565 / TT01) (Photorhabdus luminescens subsp. laumondii) protein is Elongation factor P--(R)-beta-lysine ligase.